An 87-amino-acid chain; its full sequence is U3-theraphotoxin-Hhn1b (87 aa).

Residues 1-24 (MVNMKASMFLTFAGLVLLFVVCYA) form the signal peptide. Residues 25-52 (SESEEKEFPREMLSSIFAVDNDFKQEER) constitute a propeptide that is removed on maturation. Disulfide bonds link C54/C67 and C61/C72.

Belongs to the neurotoxin 10 (Hwtx-1) family. 51 (Hntx-8) subfamily. Hntx-8 sub-subfamily. In terms of tissue distribution, expressed by the venom gland.

It is found in the secreted. Functionally, ion channel inhibitor. The protein is U3-theraphotoxin-Hhn1b of Cyriopagopus hainanus (Chinese bird spider).